The primary structure comprises 1436 residues: DNA polymerase III PolC-type (1436 aa).

Positions 420–576 (YVVFDVETTG…YDTEATAYIF (157 aa)) constitute an Exonuclease domain.

This sequence belongs to the DNA polymerase type-C family. PolC subfamily.

It localises to the cytoplasm. It carries out the reaction DNA(n) + a 2'-deoxyribonucleoside 5'-triphosphate = DNA(n+1) + diphosphate. Its function is as follows. Required for replicative DNA synthesis. This DNA polymerase also exhibits 3' to 5' exonuclease activity. The protein is DNA polymerase III PolC-type of Staphylococcus aureus (strain MW2).